Consider the following 263-residue polypeptide: Glutamate racemase (263 aa).

Residues Asp-13–Ser-14 and Tyr-45–Gly-46 contribute to the substrate site. Cys-77 acts as the Proton donor/acceptor in catalysis. Residue Asn-78–Thr-79 coordinates substrate. Cys-185 acts as the Proton donor/acceptor in catalysis. Substrate is bound at residue Thr-186 to His-187.

Belongs to the aspartate/glutamate racemases family.

The enzyme catalyses L-glutamate = D-glutamate. It participates in cell wall biogenesis; peptidoglycan biosynthesis. In terms of biological role, provides the (R)-glutamate required for cell wall biosynthesis. The protein is Glutamate racemase of Vibrio vulnificus (strain YJ016).